A 330-amino-acid chain; its full sequence is MSDSEKLNLDSIIGRLLEVQGSRPGKNVQLTENEIRGLCLKSREIFLSQPILLELEAPLKICGDIHGQYYDLLRLFEYGGFPPESNYLFLGDYVDRGKQSLETICLLLAYKIKYPENFFLLRGNHECASINRIYGFYDECKRRYNIKLWKTFTDCFNCLPIAAIVDEKIFCCHGGLSPDLQSMEQIRRIMRPTDVPDQGLLCDLLWSDPDKDVQGWGENDRGVSFTFGAEVVAKFLHKHDLDLICRAHQVVEDGYEFFAKRQLVTLFSAPNYCGEFDNAGAMMSVDETLMCSFQILKPADKNKGKYGQFSGLNPGGRPITPPRNSAKAKK.

S2 is subject to N-acetylserine. A phosphoserine mark is found at S2 and S22. Positions 64, 66, 92, and 124 each coordinate Mn(2+). H125 serves as the catalytic Proton donor. H173 and H248 together coordinate Mn(2+). Residue K305 is modified to N6-acetyllysine. Y306 is subject to Phosphotyrosine. Positions 306 to 330 (YGQFSGLNPGGRPITPPRNSAKAKK) are disordered. T320 is modified (phosphothreonine). S325 carries the phosphoserine modification.

Belongs to the PPP phosphatase family. PP-1 subfamily. In terms of assembly, PP1 comprises a catalytic subunit, PPP1CA, PPP1CB or PPP1CC, which is folded into its native form by inhibitor 2 and glycogen synthetase kinase 3, and then complexed to one or several targeting or regulatory subunits. PPP1R12A, PPP1R12B and PPP1R12C mediate binding to myosin. PPP1R3A (in skeletal muscle), PPP1R3B (in liver), PPP1R3C, PPP1R3D and PPP1R3F (in brain) mediate binding to glycogen. Interacts with PPP1R39. Interacts with BTBD10. Interacts with KCTD20. Interacts with PPP1R9A and PPP1R9B. Part of a complex containing PPP1R15B, PP1 and NCK1/2. Interacts with PHACTR4; which acts as an activator of PP1 activity. Interacts with PPP1R15A and PPP1R15B; the interactions mediate binding to EIF2S1. Interacts with PPP1R7. Interacts with YLPM1. Forms a complex with ILF2, ILF3, YLPM1, KHDRBS1, RBMX and NCOA5. Interacts with NOM1 and PPP1R8. Interacts with PPP1R16B. Interacts with RPSA only in the presence of PPP1R16B. Component of the PNUTS-PP1 phosphatase complex, composed of PPP1R10/PNUTS, TOX4, WDR82, and PPP1CA or PPP1CB or PPP1CC. Interacts with PPP1R10/PNUTS and PPP1R8. Interacts with WDR82 in the presence of PPP1R10/PNUTS. Interacts with TRIM28; the interaction dephosphorylates TRIM28 on 'Ser-824' and forms a complex at the p21 promoter site. Interacts with isoform 1 and isoform 4 of NEK2. Interacts with FER; this promotes phosphorylation at Thr-320. Interacts with DAB2; the interaction is mutually exclusive with the AXIN1:PPP1CA interaction. Interacts with FOXP3. Interacts with CENPA. Interacts with ATG16L1. Found in a complex with PPP1CA, PPP1CC, SHC1 and PEAK1. Interacts with tensin TNS1. Interacts with SAXO4, PPP1R21, PPP1R26, PPP1R27, PPP1R35, PPP1R36, PPP1R37, SH3RF2, ELFN1 and ELFN2. Interacts with TPRN; the interaction results in inhibition of PPC1A phosphatase activity. Interacts with SKA1 (via C-terminus); the interaction is direct and required for the recruitment of PP1 to the kinetochore. Interacts with the KNL1 complex subunit KNL1; the interaction is direct and mutually exclusive with KNL1 binding to microtubules. Component of the SHOC2-MRAS-PP1c (SMP) complex consisting of SHOC2, GTP-bound M-Ras/MRAS and the catalytic subunit of protein phosphatase 1 (either PPP1CA, PPP1CB or PPP1CC). SHOC2 and PP1c preferably bind M-Ras/MRAS, but they also bind K-Ras/KRAS, N-Ras/NRAS and H-Ras/HRAS; these interactions are GTP-dependent and both SHOC2 and PP1c are required to form a stable complex. Interacts with SHOC2 in the absence of Ras GTPases. As to quaternary structure, (Microbial infection) Interacts with HHV-1 ICP34.5. (Microbial infection) Interacts with Venezuelan equine encephalitis virus (VEEV) capsid protein; this interaction dephosphorylates the capsid protein, which increases its ability to bind to the viral genome. Fe cation is required as a cofactor. Requires Mn(2+) as cofactor. Post-translationally, phosphorylated. Dephosphorylated at Thr-320 in the presence of ionizing radiation.

The protein localises to the cytoplasm. It localises to the nucleus. Its subcellular location is the nucleoplasm. The protein resides in the nucleolus. The enzyme catalyses O-phospho-L-seryl-[protein] + H2O = L-seryl-[protein] + phosphate. The catalysed reaction is O-phospho-L-threonyl-[protein] + H2O = L-threonyl-[protein] + phosphate. The phosphatase activity of the PPP1R15A-PP1 complex toward EIF2S1 is specifically inhibited by Salubrinal, a drug that protects cells from endoplasmic reticulum stress. In terms of biological role, protein phosphatase that associates with over 200 regulatory proteins to form highly specific holoenzymes which dephosphorylate hundreds of biological targets. Protein phosphatase 1 (PP1) is essential for cell division, transcription elongation, and participates in the regulation of glycogen metabolism, muscle contractility and protein synthesis. Involved in regulation of ionic conductances and long-term synaptic plasticity. May play an important role in dephosphorylating substrates such as the postsynaptic density-associated Ca(2+)/calmodulin dependent protein kinase II. Catalytic component of the PNUTS-PP1 protein phosphatase complex, a protein phosphatase 1 (PP1) complex that promotes RNA polymerase II transcription pause-release, allowing transcription elongation: the PNUTS-PP1 complex mediates the release of RNA polymerase II from promoter-proximal region of genes by catalyzing dephosphorylation of proteins involved in transcription, such as AFF4, CDK9, MEPCE, INTS12, NCBP1, POLR2M/GDOWN1 and SUPT6H. The PNUTS-PP1 complex also regulates transcription termination by mediating dephosphorylation of SUPT5H in termination zones downstream of poly(A) sites, thereby promoting deceleration of RNA polymerase II transcription. PNUTS-PP1 complex is also involved in the response to replication stress by mediating dephosphorylation of POLR2A at 'Ser-5' of the CTD, promoting RNA polymerase II degradation. PNUTS-PP1 also plays a role in the control of chromatin structure and cell cycle progression during the transition from mitosis into interphase. Regulates NEK2 function in terms of kinase activity and centrosome number and splitting, both in the presence and absence of radiation-induced DNA damage. Regulator of neural tube and optic fissure closure, and enteric neural crest cell (ENCCs) migration during development. In balance with CSNK1D and CSNK1E, determines the circadian period length, through the regulation of the speed and rhythmicity of PER1 and PER2 phosphorylation. May dephosphorylate CSNK1D and CSNK1E. Dephosphorylates the 'Ser-418' residue of FOXP3 in regulatory T-cells (Treg) from patients with rheumatoid arthritis, thereby inactivating FOXP3 and rendering Treg cells functionally defective. Dephosphorylates CENPA. Dephosphorylates the 'Ser-139' residue of ATG16L1 causing dissociation of ATG12-ATG5-ATG16L1 complex, thereby inhibiting autophagy. Together with PPP1CC (PP1-gamma subunit), dephosphorylates IFIH1/MDA5 and RIG-I leading to their activation and a functional innate immune response. Core component of the SHOC2-MRAS-PP1c (SMP) holophosphatase complex that regulates the MAPK pathway activation. The SMP complex specifically dephosphorylates the inhibitory phosphorylation at 'Ser-259' of RAF1 kinase, 'Ser-365' of BRAF kinase and 'Ser-214' of ARAF kinase, stimulating their kinase activities. The SMP complex enhances the dephosphorylation activity and substrate specificity of PP1c. (Microbial infection) Necessary for alphaviruses replication. The chain is Serine/threonine-protein phosphatase PP1-alpha catalytic subunit (PPP1CA) from Homo sapiens (Human).